The primary structure comprises 429 residues: Glutamate-1-semialdehyde 2,1-aminomutase (429 aa).

Position 267 is an N6-(pyridoxal phosphate)lysine (K267).

The protein belongs to the class-III pyridoxal-phosphate-dependent aminotransferase family. HemL subfamily. In terms of assembly, homodimer. Requires pyridoxal 5'-phosphate as cofactor.

It is found in the cytoplasm. The enzyme catalyses (S)-4-amino-5-oxopentanoate = 5-aminolevulinate. It functions in the pathway porphyrin-containing compound metabolism; protoporphyrin-IX biosynthesis; 5-aminolevulinate from L-glutamyl-tRNA(Glu): step 2/2. The protein is Glutamate-1-semialdehyde 2,1-aminomutase of Stenotrophomonas maltophilia (strain K279a).